Here is a 286-residue protein sequence, read N- to C-terminus: Undecaprenyl-diphosphatase (286 aa).

7 helical membrane passes run 50–70 (GAAFTAITQLGTETAVIVYFW), 97–117 (MGWLVILGSLPIIVLGLIFQD), 126–146 (LWIVATMLIVFGLILAVADAV), 156–176 (LTYKHGIFYGFAQAMALIPGV), 200–220 (SFLLAIPAVFGSGLYQLYKVM), 236–256 (LATLIAFVVGYVIIGWFLKFV), and 264–284 (FVWYRIFLGLALYLLLGFNVI).

It belongs to the UppP family.

The protein localises to the cell membrane. It catalyses the reaction di-trans,octa-cis-undecaprenyl diphosphate + H2O = di-trans,octa-cis-undecaprenyl phosphate + phosphate + H(+). Its function is as follows. Catalyzes the dephosphorylation of undecaprenyl diphosphate (UPP). Confers resistance to bacitracin. This chain is Undecaprenyl-diphosphatase, found in Arthrobacter sp. (strain FB24).